The following is a 293-amino-acid chain: Protein BOBBER 2 (293 aa).

An N-acetylalanine modification is found at Ala2. A coiled-coil region spans residues 50 to 80; sequence EKEIVAAVMAAKQRLREAEKKKLEKESVKSM. Basic and acidic residues-rich tracts occupy residues 67 to 102 and 110 to 120; these read AEKK…KEES and EIEKPKEEKES. Residues 67 to 125 form a disordered region; it reads AEKKKLEKESVKSMEVEKPKKDSLKPTELEKPKEESLMATDPMEIEKPKEEKESGPIVP. Residues 131-220 form the CS domain; it reads LDFEKYSWGQ…DQMEWWKYCV (90 aa).

The protein resides in the cytoplasm. It localises to the cytoplasmic granule. In terms of biological role, small heat shock protein required for the establishment of auxin gradients and for patterning of the apical domain of the embryo. Involved in the specification of the cotyledon primordia. Also required for normal inflorescence and floral meristem function, normal developmental patterning and thermotolerance. Acts as a molecular chaperone. This is Protein BOBBER 2 (BOB2) from Arabidopsis thaliana (Mouse-ear cress).